A 244-amino-acid polypeptide reads, in one-letter code: tRNA pseudouridine synthase A (244 aa).

Asp-52 serves as the catalytic Nucleophile. Tyr-111 is a binding site for substrate.

The protein belongs to the tRNA pseudouridine synthase TruA family. In terms of assembly, homodimer.

It carries out the reaction uridine(38/39/40) in tRNA = pseudouridine(38/39/40) in tRNA. Its function is as follows. Formation of pseudouridine at positions 38, 39 and 40 in the anticodon stem and loop of transfer RNAs. The protein is tRNA pseudouridine synthase A of Thermosipho africanus (strain TCF52B).